A 147-amino-acid chain; its full sequence is Delta-latroinsectotoxin-Lhe1a (147 aa).

4 ANK repeats span residues 57 to 59, 66 to 78, 79 to 96, and 98 to 125; these read VSI, NNWTPLHFAIYFK, KNPAVSAVLILENKDIEA, and TSIMLIVQKLLLELYNYFINNYAETLDE.

It belongs to the cationic peptide 01 (latrotoxin) family. 04 (delta-latroinsectotoxin) subfamily. As to quaternary structure, homotetramer in membrane. Expressed by the venom gland.

Its subcellular location is the secreted. The protein resides in the target cell membrane. Functionally, insecticidal presynaptic neurotoxin that induces massive neurotransmitter release at insect (but not vertebrate) neuromuscular junctions. Native toxin forms cation-permeable pores (with high permeability to calcium) in lipid membranes locust muscle membrane and artificial lipid bilayers. May bind to insect neurexin-1 homolog, insect adhesion G protein-coupled receptor L1 homolog, and insect receptor-type tyrosine-protein phosphatase S homolog, and induces neurotransmitter exocytosis both by forming tetrameric pores in membranes and signaling via G protein-coupled receptor. Oligomerization is a process independent of divalent cations. This chain is Delta-latroinsectotoxin-Lhe1a, found in Latrodectus hesperus (Western black widow spider).